A 63-amino-acid chain; its full sequence is Large ribosomal subunit protein uL29 (63 aa).

The protein belongs to the universal ribosomal protein uL29 family.

The chain is Large ribosomal subunit protein uL29 from Haemophilus ducreyi (strain 35000HP / ATCC 700724).